Reading from the N-terminus, the 201-residue chain is Thiamine transporter ThiT (201 aa).

Transmembrane regions (helical) follow at residues 7–27, 29–49, 53–73, 85–105, 124–144, and 170–190; these read LVVI…TYIP, TTGV…VLAM, LVPA…LRGI, ILEY…FASF, GIII…VVFW, and TVLT…LFVA.

The protein belongs to the vitamin uptake transporter (VUT/ECF) (TC 2.A.88) family. Thiamine transporter subfamily. In Lactococcus lactis subsp. cremoris (strain NZ9000) forms a stable energy-coupling factor (ECF) transporter complex probably composed of a membrane-embedded substrate-binding protein (S component), two ATP-binding proteins (A components) and a transmembrane protein (T component).

Its subcellular location is the cell membrane. In terms of biological role, thiamine-binding protein that interacts with the energy-coupling factor (ECF) ABC-transporter complex. Unlike classic ABC transporters this ECF transporter provides the energy necessary to transport a number of different substrates. The substrates themselves are bound by transmembrane, not extracytoplasmic soluble proteins and transport it into cells. Binds thiamine with a dissociation constant of 0.5 nM. Upon coexpression with its energy-coupling factor (ECF) ABC-transporter complex EcfA1A2T in Lactococcus lactis subsp. cremoris (strain NZ9000) allows thiamine uptake; uptake requires both ThiT and EcfA1A2T. This is Thiamine transporter ThiT (thiT) from Lacticaseibacillus paracasei (strain ATCC 334 / BCRC 17002 / CCUG 31169 / CIP 107868 / KCTC 3260 / NRRL B-441) (Lactobacillus paracasei).